The primary structure comprises 235 residues: Phosphoribosylaminoimidazole-succinocarboxamide synthase (235 aa).

This sequence belongs to the SAICAR synthetase family.

The enzyme catalyses 5-amino-1-(5-phospho-D-ribosyl)imidazole-4-carboxylate + L-aspartate + ATP = (2S)-2-[5-amino-1-(5-phospho-beta-D-ribosyl)imidazole-4-carboxamido]succinate + ADP + phosphate + 2 H(+). It functions in the pathway purine metabolism; IMP biosynthesis via de novo pathway; 5-amino-1-(5-phospho-D-ribosyl)imidazole-4-carboxamide from 5-amino-1-(5-phospho-D-ribosyl)imidazole-4-carboxylate: step 1/2. The polypeptide is Phosphoribosylaminoimidazole-succinocarboxamide synthase (Clostridium perfringens (strain SM101 / Type A)).